The primary structure comprises 240 residues: uncharacterized protein (240 aa).

The protein localises to the mitochondrion. This is an uncharacterized protein from Arabidopsis thaliana (Mouse-ear cress).